The primary structure comprises 75 residues: Acyl carrier protein (75 aa).

The 74-residue stretch at 1-74 folds into the Carrier domain; the sequence is MLDKVKEIIV…DVINYIEANK (74 aa). At serine 34 the chain carries O-(pantetheine 4'-phosphoryl)serine.

This sequence belongs to the acyl carrier protein (ACP) family. In terms of processing, 4'-phosphopantetheine is transferred from CoA to a specific serine of apo-ACP by AcpS. This modification is essential for activity because fatty acids are bound in thioester linkage to the sulfhydryl of the prosthetic group.

Its subcellular location is the cytoplasm. The protein operates within lipid metabolism; fatty acid biosynthesis. In terms of biological role, carrier of the growing fatty acid chain in fatty acid biosynthesis. This Fusobacterium nucleatum subsp. nucleatum (strain ATCC 25586 / DSM 15643 / BCRC 10681 / CIP 101130 / JCM 8532 / KCTC 2640 / LMG 13131 / VPI 4355) protein is Acyl carrier protein.